The sequence spans 91 residues: Small ribosomal subunit protein bS16c (91 aa).

The protein belongs to the bacterial ribosomal protein bS16 family.

The protein resides in the plastid. It is found in the chloroplast. The chain is Small ribosomal subunit protein bS16c from Vitis vinifera (Grape).